A 432-amino-acid chain; its full sequence is Serine/threonine-protein kinase Sgk1 (432 aa).

Residues Pro-67–His-93 are disordered. A compositionally biased stretch (polar residues) spans Gln-82–Pro-92. One can recognise a Protein kinase domain in the interval Phe-99–Phe-356. Residues Ile-105–Val-113 and Lys-128 each bind ATP. Residue Asp-223 is the Proton acceptor of the active site. Positions Ser-357–Leu-432 constitute an AGC-kinase C-terminal domain.

The protein belongs to the protein kinase superfamily. AGC Ser/Thr protein kinase family.

It is found in the cytoplasm. It localises to the nucleus. The protein localises to the endoplasmic reticulum. The catalysed reaction is L-seryl-[protein] + ATP = O-phospho-L-seryl-[protein] + ADP + H(+). The enzyme catalyses L-threonyl-[protein] + ATP = O-phospho-L-threonyl-[protein] + ADP + H(+). Functionally, protein kinase that may play an important role in cellular stress response. May be involved in the regulation of processes such as cell survival, neuronal excitability and renal sodium excretion. The sequence is that of Serine/threonine-protein kinase Sgk1 (SGK1) from Gallus gallus (Chicken).